The primary structure comprises 264 residues: Protein FAM228B (264 aa).

It belongs to the FAM228 family.

The polypeptide is Protein FAM228B (FAM228B) (Bos taurus (Bovine)).